The following is a 748-amino-acid chain: Adenosylcobalamin-dependent ribonucleoside-triphosphate reductase (748 aa).

An intrachain disulfide couples Cys-123 to Cys-426. The tract at residues 151 to 162 (SMPYSFMFDELM) is effector region-1. The effector region-2 stretch occupies residues 172 to 320 (TKDNIAKLPP…IGNLIGKTVV (149 aa)). Active-site residues include Cys-415 and Glu-417. The segment at 572–633 (FHYAGYLIQR…DPAFASAGTV (62 aa)) is adenosylcobalamin-binding-1. Positions 692 to 733 (FKQAPKEPIDVKTYKQKCAAIHGSVAAVFAVQNADHDQKDLE) are adenosylcobalamin-binding-2.

The protein belongs to the class II ribonucleoside-triphosphate reductase family. As to quaternary structure, monomer. Requires adenosylcob(III)alamin as cofactor.

It carries out the reaction a 2'-deoxyribonucleoside 5'-triphosphate + [thioredoxin]-disulfide + H2O = a ribonucleoside 5'-triphosphate + [thioredoxin]-dithiol. With respect to regulation, allosterically regulated by ATP and dNTP. The chain is Adenosylcobalamin-dependent ribonucleoside-triphosphate reductase (rtpR) from Lacticaseibacillus paracasei (strain ATCC 334 / BCRC 17002 / CCUG 31169 / CIP 107868 / KCTC 3260 / NRRL B-441) (Lactobacillus paracasei).